The sequence spans 1223 residues: A disintegrin and metalloproteinase with thrombospondin motifs 14 (1223 aa).

An N-terminal signal peptide occupies residues 1–22 (MAPLRALLSYLLPLHCALCAAA). The propeptide occupies 23–252 (GSRTPELHLS…QLGDTERKRR (230 aa)). An N-linked (GlcNAc...) asparagine glycan is attached at asparagine 109. The region spanning 259–460 (YSIEVLLVVD…PSYDCLLDDP (202 aa)) is the Peptidase M12B domain. 3 disulfides stabilise this stretch: cysteine 336/cysteine 382, cysteine 376/cysteine 455, and cysteine 415/cysteine 441. Histidine 398 contributes to the Zn(2+) binding site. Glutamate 399 is a catalytic residue. Histidine 402 and histidine 408 together coordinate Zn(2+). Residues 461-551 (FDPAWPQPPE…WKSPEQTYGQ (91 aa)) form the Disintegrin domain. The N-linked (GlcNAc...) asparagine glycan is linked to asparagine 475. Cystine bridges form between cysteine 482/cysteine 507, cysteine 493/cysteine 516, cysteine 502/cysteine 535, cysteine 529/cysteine 540, cysteine 564/cysteine 601, cysteine 568/cysteine 606, and cysteine 579/cysteine 591. The TSP type-1 1 domain occupies 552–607 (DGGWSSWTKFGSCSRSCGGGVRSRSRSCNNPSPAYGGRLCLGPMFEYQVCNSEECP). The interval 730 to 846 (LKLVQIPAGA…GSNNVLLEEM (117 aa)) is spacer. TSP type-1 domains lie at 847–907 (DTYE…HPCS), 908–967 (QPVW…LRVP), and 968–1022 (CPAQ…PACG). Asparagine 941 carries N-linked (GlcNAc...) asparagine glycosylation. Cystine bridges form between cysteine 980–cysteine 1016, cysteine 984–cysteine 1021, and cysteine 995–cysteine 1005. Asparagine 1027 carries an N-linked (GlcNAc...) asparagine glycan. A PLAC domain is found at 1059–1097 (STEPCTGDRSVFCQMEVLDRYCSIPGYHRLCCVSCIKKA). Residues 1100–1223 (PNPGPDPGPT…TSLPAASPVT (124 aa)) are disordered. Over residues 1101 to 1125 (NPGPDPGPTSLPPFSTPGSPLPGPQ) the composition is skewed to pro residues. Residues 1199–1211 (PEDKGQPGEDLRH) show a composition bias toward basic and acidic residues.

The precursor is cleaved by a furin endopeptidase. Post-translationally, glycosylated. Can be O-fucosylated by POFUT2 on a serine or a threonine residue found within the consensus sequence C1-X(2)-(S/T)-C2-G of the TSP type-1 repeat domains where C1 and C2 are the first and second cysteine residue of the repeat, respectively. Fucosylated repeats can then be further glycosylated by the addition of a beta-1,3-glucose residue by the glucosyltransferase, B3GALTL. Fucosylation mediates the efficient secretion of ADAMTS family members. Can also be C-glycosylated with one or two mannose molecules on tryptophan residues within the consensus sequence W-X-X-W of the TPRs, and N-glycosylated. These other glycosylations can also facilitate secretion. In terms of tissue distribution, expressed in retina and at low levels in brain, lung and placenta. High expression in fetal tissues.

Its subcellular location is the secreted. The protein resides in the extracellular space. The protein localises to the extracellular matrix. Has aminoprocollagen type I processing activity in the absence of ADAMTS2. Seems to be synthesized as a latent enzyme that requires activation to display aminoprocollagen peptidase activity. Cleaves lysyl oxidase LOX at a site downstream of its propeptide cleavage site to produce a short LOX form. In Homo sapiens (Human), this protein is A disintegrin and metalloproteinase with thrombospondin motifs 14 (ADAMTS14).